Consider the following 183-residue polypeptide: ATP synthase subunit delta (183 aa).

Belongs to the ATPase delta chain family. In terms of assembly, F-type ATPases have 2 components, F(1) - the catalytic core - and F(0) - the membrane proton channel. F(1) has five subunits: alpha(3), beta(3), gamma(1), delta(1), epsilon(1). F(0) has three main subunits: a(1), b(2) and c(10-14). The alpha and beta chains form an alternating ring which encloses part of the gamma chain. F(1) is attached to F(0) by a central stalk formed by the gamma and epsilon chains, while a peripheral stalk is formed by the delta and b chains.

It is found in the cell inner membrane. Its function is as follows. F(1)F(0) ATP synthase produces ATP from ADP in the presence of a proton or sodium gradient. F-type ATPases consist of two structural domains, F(1) containing the extramembraneous catalytic core and F(0) containing the membrane proton channel, linked together by a central stalk and a peripheral stalk. During catalysis, ATP synthesis in the catalytic domain of F(1) is coupled via a rotary mechanism of the central stalk subunits to proton translocation. This protein is part of the stalk that links CF(0) to CF(1). It either transmits conformational changes from CF(0) to CF(1) or is implicated in proton conduction. This chain is ATP synthase subunit delta, found in Oleidesulfovibrio alaskensis (strain ATCC BAA-1058 / DSM 17464 / G20) (Desulfovibrio alaskensis).